Here is a 248-residue protein sequence, read N- to C-terminus: uncharacterized protein (248 aa).

A helical membrane pass occupies residues Cys-104–Ala-122.

It is found in the membrane. This is an uncharacterized protein from Escherichia coli (strain K12).